A 256-amino-acid polypeptide reads, in one-letter code: Adenylate kinase (256 aa).

49–54 serves as a coordination point for ATP; the sequence is GAGKGT. An NMP region spans residues 69-98; sequence ATGDMLREQVQQKTPLGIEAKKIMDAGGLV. Residues Thr-70, Arg-75, 96 to 98, 125 to 128, and Gln-132 each bind AMP; these read GLV and GFPR. The tract at residues 166–203 is LID; that stretch reads GRLVHPASGRSYHKEFNPPKKRNVDDVTGEPLIQRSDD. ATP contacts are provided by residues Arg-167 and 176–177; that span reads SY. The AMP site is built by Arg-200 and Arg-211. ATP is bound at residue Gln-239.

Belongs to the adenylate kinase family. AK2 subfamily. As to quaternary structure, monomer.

It is found in the cytoplasm. Its subcellular location is the cytosol. It localises to the mitochondrion intermembrane space. It carries out the reaction AMP + ATP = 2 ADP. Its function is as follows. Catalyzes the reversible transfer of the terminal phosphate group between ATP and AMP. Plays an important role in cellular energy homeostasis and in adenine nucleotide metabolism. Adenylate kinase activity is critical for regulation of the phosphate utilization and the AMP de novo biosynthesis pathways. This Laccaria bicolor (strain S238N-H82 / ATCC MYA-4686) (Bicoloured deceiver) protein is Adenylate kinase.